A 68-amino-acid polypeptide reads, in one-letter code: MVQRKSQDGKTVMVEQIGSPIRNSRIQHATLKGLGLNKMRRRRILKDTLCVRGMIAKVRHLVRVIDEG.

The protein belongs to the universal ribosomal protein uL30 family. As to quaternary structure, part of the 50S ribosomal subunit.

The polypeptide is Large ribosomal subunit protein uL30 (Bartonella quintana (strain Toulouse) (Rochalimaea quintana)).